The sequence spans 162 residues: 2-C-methyl-D-erythritol 2,4-cyclodiphosphate synthase (162 aa).

Residues Asp10 and His12 each contribute to the a divalent metal cation site. 4-CDP-2-C-methyl-D-erythritol 2-phosphate is bound by residues 10–12 (DVH) and 36–37 (HS). Residue His44 participates in a divalent metal cation binding. Residues 58 to 60 (DIG), 63 to 67 (FPDTD), 102 to 108 (AQAPRMA), 134 to 137 (TTSE), Phe141, and Arg144 each bind 4-CDP-2-C-methyl-D-erythritol 2-phosphate.

The protein belongs to the IspF family. Homotrimer. The cofactor is a divalent metal cation.

The enzyme catalyses 4-CDP-2-C-methyl-D-erythritol 2-phosphate = 2-C-methyl-D-erythritol 2,4-cyclic diphosphate + CMP. It participates in isoprenoid biosynthesis; isopentenyl diphosphate biosynthesis via DXP pathway; isopentenyl diphosphate from 1-deoxy-D-xylulose 5-phosphate: step 4/6. Functionally, involved in the biosynthesis of isopentenyl diphosphate (IPP) and dimethylallyl diphosphate (DMAPP), two major building blocks of isoprenoid compounds. Catalyzes the conversion of 4-diphosphocytidyl-2-C-methyl-D-erythritol 2-phosphate (CDP-ME2P) to 2-C-methyl-D-erythritol 2,4-cyclodiphosphate (ME-CPP) with a corresponding release of cytidine 5-monophosphate (CMP). This is 2-C-methyl-D-erythritol 2,4-cyclodiphosphate synthase from Chromohalobacter salexigens (strain ATCC BAA-138 / DSM 3043 / CIP 106854 / NCIMB 13768 / 1H11).